A 199-amino-acid chain; its full sequence is Recombination protein RecR (199 aa).

A C4-type zinc finger spans residues 57–72 (CSICGNITESDPCMIC). The Toprim domain occupies 80–176 (SKVVVVEQPK…KVTRLAHGLA (97 aa)).

It belongs to the RecR family.

May play a role in DNA repair. It seems to be involved in an RecBC-independent recombinational process of DNA repair. It may act with RecF and RecO. The polypeptide is Recombination protein RecR (Ligilactobacillus salivarius (strain UCC118) (Lactobacillus salivarius)).